The chain runs to 78 residues: Small ribosomal subunit protein bS18 (78 aa).

This sequence belongs to the bacterial ribosomal protein bS18 family. As to quaternary structure, part of the 30S ribosomal subunit. Forms a tight heterodimer with protein bS6.

In terms of biological role, binds as a heterodimer with protein bS6 to the central domain of the 16S rRNA, where it helps stabilize the platform of the 30S subunit. The polypeptide is Small ribosomal subunit protein bS18 (Kineococcus radiotolerans (strain ATCC BAA-149 / DSM 14245 / SRS30216)).